The sequence spans 195 residues: ADP-ribosylation factor L (195 aa).

Gly2 carries the N-myristoyl glycine lipid modification. Residues Gly25–Thr32, Asp72–Pro76, and Asn131–Asp134 each bind GTP.

The protein belongs to the small GTPase superfamily. Arf family.

May be involved in trafficking events within the endosomal system. The chain is ADP-ribosylation factor L (arrL) from Dictyostelium discoideum (Social amoeba).